The chain runs to 139 residues: Metallothiol transferase FosB (139 aa).

Positions 4-119 (GINHITYSVS…DGHKLELHTG (116 aa)) constitute a VOC domain. 3 residues coordinate Mg(2+): His-7, His-66, and Glu-115. The active-site Proton donor/acceptor is Glu-115.

Belongs to the fosfomycin resistance protein family. FosB subfamily. Homodimer. It depends on Mg(2+) as a cofactor.

The protein resides in the cytoplasm. Its function is as follows. Metallothiol transferase which confers resistance to fosfomycin by catalyzing the addition of a thiol cofactor to fosfomycin. L-cysteine is probably the physiological thiol donor. The sequence is that of Metallothiol transferase FosB from Staphylococcus haemolyticus.